The following is a 428-amino-acid chain: 3-phosphoshikimate 1-carboxyvinyltransferase (428 aa).

Residues Lys21, Ser22, and Arg26 each contribute to the 3-phosphoshikimate site. Lys21 lines the phosphoenolpyruvate pocket. Gly94 and Arg122 together coordinate phosphoenolpyruvate. 6 residues coordinate 3-phosphoshikimate: Ser166, Ser167, Gln168, Ser194, Asp306, and Lys333. Gln168 provides a ligand contact to phosphoenolpyruvate. Asp306 functions as the Proton acceptor in the catalytic mechanism. 3 residues coordinate phosphoenolpyruvate: Arg337, Arg379, and Lys405.

Belongs to the EPSP synthase family. In terms of assembly, monomer.

The protein localises to the cytoplasm. The catalysed reaction is 3-phosphoshikimate + phosphoenolpyruvate = 5-O-(1-carboxyvinyl)-3-phosphoshikimate + phosphate. The protein operates within metabolic intermediate biosynthesis; chorismate biosynthesis; chorismate from D-erythrose 4-phosphate and phosphoenolpyruvate: step 6/7. Its function is as follows. Catalyzes the transfer of the enolpyruvyl moiety of phosphoenolpyruvate (PEP) to the 5-hydroxyl of shikimate-3-phosphate (S3P) to produce enolpyruvyl shikimate-3-phosphate and inorganic phosphate. This is 3-phosphoshikimate 1-carboxyvinyltransferase from Clostridium acetobutylicum (strain ATCC 824 / DSM 792 / JCM 1419 / IAM 19013 / LMG 5710 / NBRC 13948 / NRRL B-527 / VKM B-1787 / 2291 / W).